Here is a 405-residue protein sequence, read N- to C-terminus: Acetate kinase (405 aa).

Residue asparagine 10 coordinates Mg(2+). Lysine 17 is an ATP binding site. Residue arginine 93 coordinates substrate. The active-site Proton donor/acceptor is the aspartate 150. Residues 210-214 (HLGNG), 284-286 (DMR), and 332-336 (GVGEN) contribute to the ATP site. Glutamate 386 contacts Mg(2+).

It belongs to the acetokinase family. As to quaternary structure, homodimer. Mg(2+) serves as cofactor. Mn(2+) is required as a cofactor.

The protein localises to the cytoplasm. It carries out the reaction acetate + ATP = acetyl phosphate + ADP. It participates in metabolic intermediate biosynthesis; acetyl-CoA biosynthesis; acetyl-CoA from acetate: step 1/2. Its function is as follows. Catalyzes the formation of acetyl phosphate from acetate and ATP. Can also catalyze the reverse reaction. The chain is Acetate kinase from Streptomyces avermitilis (strain ATCC 31267 / DSM 46492 / JCM 5070 / NBRC 14893 / NCIMB 12804 / NRRL 8165 / MA-4680).